Consider the following 688-residue polypeptide: G protein-coupled receptor kinase 3 (688 aa).

The N-terminal stretch occupies residues 1-190 (MADLEAVLAD…ELNIHLTMND (190 aa)). Positions 54–175 (TFDKIFNQRI…MESDKFTRFC (122 aa)) constitute an RGS domain. The region spanning 191 to 453 (FSVHRIIGRG…AQELKTHDFF (263 aa)) is the Protein kinase domain. ATP-binding positions include 197-205 (IGRGGFGEV) and lysine 220. Aspartate 317 functions as the Proton acceptor in the catalytic mechanism. Residues 454–521 (RGIDWQHVYL…VISERWQQEV (68 aa)) enclose the AGC-kinase C-terminal domain. The 95-residue stretch at 558–652 (DCIVHGYMLK…WKKELTETFM (95 aa)) folds into the PH domain.

The protein belongs to the protein kinase superfamily. AGC Ser/Thr protein kinase family. GPRK subfamily. Interacts with GIT1. Post-translationally, ubiquitinated. In terms of tissue distribution, ubiquitous; brain, spleen &gt; heart, lung &gt; kidney.

The protein localises to the postsynapse. The protein resides in the presynapse. It carries out the reaction [beta-adrenergic receptor] + ATP = [beta-adrenergic receptor]-phosphate + ADP + H(+). Functionally, specifically phosphorylates the agonist-occupied form of the beta-adrenergic and closely related receptors. This Bos taurus (Bovine) protein is G protein-coupled receptor kinase 3.